The sequence spans 172 residues: WW domain binding protein VOPP1 (172 aa).

A signal peptide spans 1-22 (MRRQPAKVAALLLGLLLECTEA). Residues 23–60 (KKHCWYFEGLYPTYYICRSYEDCCGSRCCVRALSIQRL) lie on the Extracellular side of the membrane. The chain crosses the membrane as a helical span at residues 61 to 81 (WYFWFLLMMGVLFCCGAGFFI). Residues 82-172 (RRRMYPPPLI…PPYEQVVKAK (91 aa)) are Cytoplasmic-facing. The tract at residues 102–153 (RQPPNPGPGAQQPGPPYYTDPGGPGMNPVGNSMAMAFQVPPNSPQGSVACPP) is disordered. A compositionally biased stretch (pro residues) spans 104 to 119 (PPNPGPGAQQPGPPYY).

It belongs to the VOPP1/ECOP family. In terms of assembly, interacts with WWOX (via WW domain). Widely expressed with highest levels in thymus and ovary.

The protein localises to the cytoplasmic vesicle membrane. The protein resides in the late endosome membrane. It localises to the lysosome membrane. In terms of biological role, increases the transcriptional activity of NFKB1 by facilitating its nuclear translocation, DNA-binding and associated apoptotic response, when overexpressed. May sequester WWOX in lysosomal vesicles and thereby regulate WWOX role as tumor suppressor. The sequence is that of WW domain binding protein VOPP1 from Homo sapiens (Human).